The chain runs to 333 residues: D-lactate dehydrogenase (333 aa).

Residues 156-157 (HI), Asp176, 207-208 (VP), Asn213, 234-236 (VSR), and Asp260 contribute to the NAD(+) site. Residue Arg236 is part of the active site. Glu265 is an active-site residue. The active-site Proton donor is the His297.

This sequence belongs to the D-isomer specific 2-hydroxyacid dehydrogenase family. In terms of assembly, homodimer.

It catalyses the reaction (R)-lactate + NAD(+) = pyruvate + NADH + H(+). This chain is D-lactate dehydrogenase (ldhA), found in Lactobacillus delbrueckii subsp. bulgaricus (strain ATCC 11842 / DSM 20081 / BCRC 10696 / JCM 1002 / NBRC 13953 / NCIMB 11778 / NCTC 12712 / WDCM 00102 / Lb 14).